A 607-amino-acid chain; its full sequence is UvrABC system protein C (607 aa).

The 79-residue stretch at 16–94 folds into the GIY-YIG domain; that stretch reads GRPGVYRMFD…IKEWRPPYNI (79 aa). Positions 203–238 constitute a UVR domain; sequence HALTNELSTAMEEAAINLEFERAAELRDQIALLRRV.

Belongs to the UvrC family. In terms of assembly, interacts with UvrB in an incision complex.

Its subcellular location is the cytoplasm. The UvrABC repair system catalyzes the recognition and processing of DNA lesions. UvrC both incises the 5' and 3' sides of the lesion. The N-terminal half is responsible for the 3' incision and the C-terminal half is responsible for the 5' incision. The protein is UvrABC system protein C of Pseudomonas fluorescens (strain Pf0-1).